We begin with the raw amino-acid sequence, 338 residues long: Eukaryotic translation initiation factor 3 subunit H (338 aa).

The region spanning 22-154 (VQCDGLAVMK…LKAYRLTPQA (133 aa)) is the MPN domain.

The protein belongs to the eIF-3 subunit H family. As to quaternary structure, component of the eukaryotic translation initiation factor 3 (eIF-3) complex. The eIF-3 complex interacts with pix. Interacts with mxt.

Its subcellular location is the cytoplasm. In terms of biological role, component of the eukaryotic translation initiation factor 3 (eIF-3) complex, which is involved in protein synthesis of a specialized repertoire of mRNAs and, together with other initiation factors, stimulates binding of mRNA and methionyl-tRNAi to the 40S ribosome. The eIF-3 complex specifically targets and initiates translation of a subset of mRNAs involved in cell proliferation. The protein is Eukaryotic translation initiation factor 3 subunit H of Drosophila yakuba (Fruit fly).